The following is an 895-amino-acid chain: MNKHHPKLRSFYSIRKSILGVASVIVSTLFLITSQHQAQAAENTNTSDKISENQNNNATTTQPPKDTNQTQPATQPANTAKTYPAADESLKDAIKDPALENKEHDIGPREQVNFQLLDKNNETQYYHFFSIKDPADVYYTKKKAEVELDINTASTWKKFEVYENNQKLPVRLVSYSPVPEDHAYIRFPVSDGTQELKIVSSTQIDDGEETNYDYTKLVFAKPIYNDPSLVKSDTNDAVVTNDQSSSDASNQTNTNTSNQNTSTINNANNQPQATTNMSQPAQPKSSANADQASSQPAHETNSNGNTNDKTNESSNQSDVNQQYPPADESLQDAIKNPAIIDKEHTADNWRPIDFQMKNDKGERQFYHYASTVEPATVIFTKTGPIIELGLKTASTWKKFEVYEGDKKLPVELVSYDSDKDYAYIRFPVSNGTREVKIVSSIEYGENIHEDYDYTLMVFAQPITNNPDDYVDEETYNLQKLLAPYHKAKTLERQVYELEKLQEKLPEKYKAEYKKKLDQTRVELADQVKSAVTEFENVTPTNDQLTDVQEAHFVVFESEENSESVMDGFVEHPFYTATLNGQKYVVMKTKDDSYWKDLIVEGKRVTTVSKDPKNNSRTLIFPYIPDKAVYNAIVKVVVANIGYEGQYHVRIINQDINTKDDDTSQNNTSEPLNVQTGQEGKVADTDVAENSSTATNPKDASDKADVIEPDSDVVKDADNNIDKDVQHDVDHLSDMSDNNHFDKYDLKEMDTQIAKDTDRNVDKGADNSVGMSSNVDTDKDSNKNKDKVIQLNHIADKNNHNGKAAKLDVVKQNYNNTDKVTDKKTTEHLPSDIHKTVDKTVKTKEKAGTPSKENKLSQSKMLPKTGETTSSQSWWGLYALLGMLALFIPKFRKESK.

Residues 1 to 40 form the signal peptide; the sequence is MNKHHPKLRSFYSIRKSILGVASVIVSTLFLITSQHQAQA. The disordered stretch occupies residues 42–84; the sequence is ENTNTSDKISENQNNNATTTQPPKDTNQTQPATQPANTAKTYP. Residues 53-62 are compositionally biased toward low complexity; it reads NQNNNATTTQ. Residues 63 to 81 show a composition bias toward polar residues; that stretch reads PPKDTNQTQPATQPANTAK. Residues 105–232 enclose the NEAT 1 domain; sequence DIGPREQVNF…IYNDPSLVKS (128 aa). A disordered region spans residues 239–324; sequence VTNDQSSSDA…NQSDVNQQYP (86 aa). Over residues 240-276 the composition is skewed to low complexity; it reads TNDQSSSDASNQTNTNTSNQNTSTINNANNQPQATTN. Residues 277–323 show a composition bias toward polar residues; that stretch reads MSQPAQPKSSANADQASSQPAHETNSNGNTNDKTNESSNQSDVNQQY. NEAT domains are found at residues 345–471 and 543–660; these read TADN…DYVD and QLTD…TKDD. Disordered regions lie at residues 657-705, 752-782, and 841-868; these read TKDD…KADV, IAKD…DSNK, and KTKE…GETT. Composition is skewed to polar residues over residues 663–677 and 687–697; these read SQNN…QTGQ and AENSSTATNPK. Composition is skewed to basic and acidic residues over residues 752–764 and 841–854; these read IAKD…DKGA and KTKE…KENK. A compositionally biased stretch (polar residues) spans 855–868; sequence LSQSKMLPKTGETT. The LPXTG sorting signal motif lies at 861–865; sequence LPKTG. Residue Thr-864 is modified to Pentaglycyl murein peptidoglycan amidated threonine. A propeptide spans 865–895 (removed by sortase); it reads GETTSSQSWWGLYALLGMLALFIPKFRKESK.

It belongs to the IsdH family.

It is found in the secreted. The protein resides in the cell wall. In terms of biological role, binds human plasma haptoglobin-hemoglobin complexes, haptoglobin and hemoglobin. Binds haptoglobin-hemoglobin complexes with significantly higher affinity than haptoglobin alone. In Staphylococcus aureus (strain MSSA476), this protein is Iron-regulated surface determinant protein H (isdH).